Reading from the N-terminus, the 468-residue chain is Probable soluble pyridine nucleotide transhydrogenase (468 aa).

33–42 contributes to the FAD binding site; the sequence is ERGRMLGGVC.

It belongs to the class-I pyridine nucleotide-disulfide oxidoreductase family. FAD is required as a cofactor.

The protein localises to the cytoplasm. It carries out the reaction NAD(+) + NADPH = NADH + NADP(+). Functionally, conversion of NADPH, generated by peripheral catabolic pathways, to NADH, which can enter the respiratory chain for energy generation. This chain is Probable soluble pyridine nucleotide transhydrogenase (sthA), found in Mycobacterium bovis (strain ATCC BAA-935 / AF2122/97).